A 967-amino-acid chain; its full sequence is Isoleucine--tRNA ligase (967 aa).

Positions 64 to 74 (PYANGNIHIGH) match the 'HIGH' region motif. L-isoleucyl-5'-AMP is bound at residue Glu600. A 'KMSKS' region motif is present at residues 641–645 (KQSKS). Residue Lys644 participates in ATP binding.

The protein belongs to the class-I aminoacyl-tRNA synthetase family. IleS type 1 subfamily. Monomer.

It is found in the cytoplasm. It catalyses the reaction tRNA(Ile) + L-isoleucine + ATP = L-isoleucyl-tRNA(Ile) + AMP + diphosphate. Functionally, catalyzes the attachment of isoleucine to tRNA(Ile). As IleRS can inadvertently accommodate and process structurally similar amino acids such as valine, to avoid such errors it has two additional distinct tRNA(Ile)-dependent editing activities. One activity is designated as 'pretransfer' editing and involves the hydrolysis of activated Val-AMP. The other activity is designated 'posttransfer' editing and involves deacylation of mischarged Val-tRNA(Ile). The chain is Isoleucine--tRNA ligase from Agrobacterium fabrum (strain C58 / ATCC 33970) (Agrobacterium tumefaciens (strain C58)).